The primary structure comprises 71 residues: Putative membrane protein insertion efficiency factor (71 aa).

Belongs to the UPF0161 family.

The protein localises to the cell membrane. Functionally, could be involved in insertion of integral membrane proteins into the membrane. This is Putative membrane protein insertion efficiency factor from Clostridium acetobutylicum (strain ATCC 824 / DSM 792 / JCM 1419 / IAM 19013 / LMG 5710 / NBRC 13948 / NRRL B-527 / VKM B-1787 / 2291 / W).